The following is a 328-amino-acid chain: Glucokinase (328 aa).

16–21 (ADIGGT) lines the ATP pocket.

This sequence belongs to the bacterial glucokinase family.

It is found in the cytoplasm. The enzyme catalyses D-glucose + ATP = D-glucose 6-phosphate + ADP + H(+). The polypeptide is Glucokinase (Neisseria gonorrhoeae (strain ATCC 700825 / FA 1090)).